A 75-amino-acid polypeptide reads, in one-letter code: Scuwaprin-a (75 aa).

A signal peptide spans 1–24 (MSSGGLLLLLGLLTLWAELTPVSG). The 46-residue stretch at 27–72 (RPKKPGLCPPRPQKPPCVKECKNDWSCPGQQKCCSYGCIDECRDPI) folds into the WAP domain. Cystine bridges form between Cys-34–Cys-60, Cys-43–Cys-64, Cys-47–Cys-59, and Cys-53–Cys-68.

The protein belongs to the venom waprin family. Expressed by the venom gland.

The protein resides in the secreted. Functionally, damages membranes of susceptible bacteria. Has no hemolytic activity. Not toxic to mice. Does not inhibit the proteinases elastase and cathepsin G. The protein is Scuwaprin-a of Oxyuranus scutellatus scutellatus (Australian taipan).